The following is a 93-amino-acid chain: Small ribosomal subunit protein uS19 (93 aa).

The protein belongs to the universal ribosomal protein uS19 family.

In terms of biological role, protein S19 forms a complex with S13 that binds strongly to the 16S ribosomal RNA. The protein is Small ribosomal subunit protein uS19 of Mycobacterium sp. (strain JLS).